The chain runs to 564 residues: H/ACA ribonucleoprotein complex non-core subunit NAF1 (564 aa).

Disordered stretches follow at residues 1-29 (MESEQPAAVKASAPIEEPQSTETAVELGK), 108-218 (LVVQ…DSEG), 238-264 (DEDDEDFDEDGATGDRSRRRQPPKVRG), 387-489 (ASWE…HPSY), and 538-564 (PHMYPPPPPFAPPPPNNQSHQGQPPPS). Over residues 146-157 (ASGLSLLAAYSS) the composition is skewed to low complexity. Positions 238 to 249 (DEDDEDFDEDGA) are enriched in acidic residues. Threonine 250 is subject to Phosphothreonine. Serine 254 carries the phosphoserine modification. Positions 388-402 (SWEHDVEPPARYVDH) are enriched in basic and acidic residues. Phosphoserine is present on serine 403. Residues 426 to 446 (STDSVDTVTSVATTATKASSV) show a composition bias toward low complexity. The residue at position 427 (threonine 427) is a Phosphothreonine. At serine 429 the chain carries Phosphoserine. Threonine 432 carries the phosphothreonine modification. Residues 468 to 489 (PSINQHNQNQPQDEQYNFHPSY) show a composition bias toward polar residues. The segment covering 538-553 (PHMYPPPPPFAPPPPN) has biased composition (pro residues). Residues 554-564 (NQSHQGQPPPS) show a composition bias toward polar residues.

It belongs to the NAF1 family. During assembly of the complex, component of the box H/ACA small nucleolar ribonucleoprotein (H/ACA snoRNP) complex.

The protein resides in the nucleus. In terms of biological role, RNA-binding protein required for the maturation of the box H/ACA small nucleolar ribonucleoprotein (H/ACA snoRNP) complex and ribosome biogenesis. During assembly of the H/ACA snoRNP complex it associates with the complex and dissociates during complex maturation, becoming replaced by Gar1 to yield mature H/ACA snoRNP complex. The protein is H/ACA ribonucleoprotein complex non-core subunit NAF1 of Drosophila melanogaster (Fruit fly).